A 235-amino-acid polypeptide reads, in one-letter code: Matrix protein (235 aa).

Belongs to the nucleorhabdovirus type-2 matrix protein family. In terms of assembly, homomultimer. Interacts with nucleoprotein and with the cytoplasmic domain of glycoprotein.

The protein resides in the virion membrane. It localises to the host endomembrane system. Plays a major role in assembly and budding of virion. Completely covers the ribonucleoprotein coil and keep it in condensed bullet-shaped form. Inhibits viral transcription and stimulates replication. The sequence is that of Matrix protein (M) from Rottboellia (Sorghum).